Here is a 378-residue protein sequence, read N- to C-terminus: Glutamate 5-kinase (378 aa).

Lys-15 lines the ATP pocket. Substrate-binding residues include Ser-56, Asp-143, and Asn-155. 175–176 (SD) is a binding site for ATP. The 78-residue stretch at 281 to 358 (KGTLTIDAGA…PDVAVILGIS (78 aa)) folds into the PUA domain.

It belongs to the glutamate 5-kinase family.

The protein localises to the cytoplasm. The catalysed reaction is L-glutamate + ATP = L-glutamyl 5-phosphate + ADP. It functions in the pathway amino-acid biosynthesis; L-proline biosynthesis; L-glutamate 5-semialdehyde from L-glutamate: step 1/2. In terms of biological role, catalyzes the transfer of a phosphate group to glutamate to form L-glutamate 5-phosphate. This chain is Glutamate 5-kinase, found in Bradyrhizobium sp. (strain BTAi1 / ATCC BAA-1182).